Consider the following 577-residue polypeptide: Arginine--tRNA ligase (577 aa).

The 'HIGH' region motif lies at 122–132 (PNVAKEMHVGH).

It belongs to the class-I aminoacyl-tRNA synthetase family. Monomer.

It is found in the cytoplasm. It catalyses the reaction tRNA(Arg) + L-arginine + ATP = L-arginyl-tRNA(Arg) + AMP + diphosphate. The chain is Arginine--tRNA ligase (argS) from Salmonella typhimurium (strain SL1344).